We begin with the raw amino-acid sequence, 732 residues long: Copper-transporting ATPase (732 aa).

The Cytoplasmic portion of the chain corresponds to 1 to 88 (MTKAQFYIEG…NPSFLTPNVK (88 aa)). The region spanning 2-68 (TKAQFYIEGM…QIEKLGYQPR (67 aa)) is the HMA domain. Residues cysteine 13 and cysteine 16 each contribute to the Cu(+) site. The helical transmembrane segment at 89 to 109 (LALVLLGTLGVLALSMFAPLL) threads the bilayer. The Extracellular segment spans residues 110 to 122 (PLPSFLKNPFING). A helical membrane pass occupies residues 123–142 (IVQLVLSLMVMHMGRNFYVH). Residues 143–149 (GFKALWA) lie on the Cytoplasmic side of the membrane. Residues 150 to 170 (RQPNMDSLIALGTSAALLYSL) traverse the membrane as a helical segment. At 171-187 (VLLFRAYTHAPIEGYYF) the chain is on the extracellular side. A helical transmembrane segment spans residues 188–208 (ESVCVILLFVMAGKRVEENSK). Residues 209 to 336 (DKALEAMQSL…KAPIARLADK (128 aa)) are Cytoplasmic-facing. The helical transmembrane segment at 337–359 (VAGVFVPIVIGIASIAFLVWLVL) threads the bilayer. At 360 to 365 (GDFTRA) the chain is on the extracellular side. Residues 366–383 (LEVFIAILVISCPCALGL) form a helical membrane-spanning segment. The Cytoplasmic segment spans residues 384-663 (ATPMALLVAQ…KLSALTIANI (280 aa)). Catalysis depends on aspartate 421, which acts as the 4-aspartylphosphate intermediate. The Mg(2+) site is built by aspartate 609 and aspartate 613. A helical membrane pass occupies residues 664 to 683 (KQNLFWAFCYNSIAIPLACG). The Extracellular portion of the chain corresponds to 684–694 (VAYKLGIMFNP). A helical transmembrane segment spans residues 695 to 713 (MLASLAMSLSSVSVVLNAQ). Over 714–732 (RLRGAHFKIRGSHENRHSS) the chain is Cytoplasmic.

It belongs to the cation transport ATPase (P-type) (TC 3.A.3) family. Type IB subfamily.

The protein localises to the cell membrane. It carries out the reaction Cu(+)(in) + ATP + H2O = Cu(+)(out) + ADP + phosphate + H(+). Probably involved in copper export. The protein is Copper-transporting ATPase (copA) of Helicobacter felis (strain ATCC 49179 / CCUG 28539 / NCTC 12436 / CS1).